The primary structure comprises 252 residues: MKIRRIVSTIAIALSVFTFAHAQSFENVENNAKVFSLHLGATRMIYKPNSSGETLAVINEHNYPILVQANVLSEDQKNIAPFIITPPLFRLDALQSSRLRIVKTEGAFPIDRESLQWICVKAIPPKYEDKWAKEEVSGKKSDKATMNIQVSVSSCIKLFVRPADVKGQPDDVAGKIKWQKVGNKLKGVNPTPFYMDIAELRVGEKEITETHYIAPFSSYEYPMPVNGGGDVRWKVVTDYGGISKTFETGLNI.

The N-terminal stretch at 1–22 (MKIRRIVSTIAIALSVFTFAHA) is a signal peptide.

It belongs to the periplasmic pilus chaperone family.

Its subcellular location is the periplasm. Involved in the biogenesis of the AAF/I fimbriae. This Escherichia coli protein is Chaperone protein AggD (aggD).